Consider the following 407-residue polypeptide: Argininosuccinate synthase (407 aa).

Residues 13 to 21 and Ala-40 contribute to the ATP site; that span reads AYSGGLDTS. Residues Tyr-91 and Ser-96 each contribute to the L-citrulline site. Gly-121 contributes to the ATP binding site. L-aspartate-binding residues include Thr-123, Asn-127, and Asp-128. Residue Asn-127 coordinates L-citrulline. Residues Arg-131, Ser-182, Ser-191, Glu-267, and Tyr-279 each contribute to the L-citrulline site.

This sequence belongs to the argininosuccinate synthase family. Type 1 subfamily. Homotetramer.

The protein resides in the cytoplasm. The catalysed reaction is L-citrulline + L-aspartate + ATP = 2-(N(omega)-L-arginino)succinate + AMP + diphosphate + H(+). Its pathway is amino-acid biosynthesis; L-arginine biosynthesis; L-arginine from L-ornithine and carbamoyl phosphate: step 2/3. The protein is Argininosuccinate synthase of Bartonella bacilliformis (strain ATCC 35685 / KC583 / Herrer 020/F12,63).